The sequence spans 352 residues: MKSLVLLVALLLWSSSVPAYPSITVSPDEEQNLNHYIQVLENLVLSVPPKEPGREKKSNSPKHVYSIASKGSKFKELITHGDTSTENDVLTNPISEETTTFPTGDFTPEIGMKKHMESTPFWSIKPNNVSIVLHAEEPYIEKEEPEPEPEPTARQTEAPRTLPVVTESSTSPYVTSYKSPVTTSDRSTGIEISTESEDVPQLSGETAIEKSKELTFGKHPESWNNDDILKKILDINSQVQQALLSDTSNPAYREDIEASKEHLKRSLALAAAAEHKLETMYKSQLLSPGQTSNKIDDIETVINMLCNSRSKLYEYLDIKYVPPEMREEAATVFNTLKNMCRSRRVTALLKVY.

The first 19 residues, 1 to 19 (MKSLVLLVALLLWSSSVPA), serve as a signal peptide directing secretion. The N-linked (GlcNAc...) asparagine glycan is linked to Asn-128. The segment at 140 to 203 (IEKEEPEPEP…TESEDVPQLS (64 aa)) is disordered. Polar residues predominate over residues 166–193 (TESSTSPYVTSYKSPVTTSDRSTGIEIS).

The protein belongs to the SPESP1 family. Post-translationally, glycosylated. In testis there are two predominant forms of 77- and 67-kDa and a form of 47-kDa, whereas in epididymal sperm from caput, corpus, and cauda there are two forms of 47- and 43-kDa. Testis forms contain complex carbohydrate residues. Epididymal sperm forms are N-glycosylated. Then undergoes significant glycosylation in the testis and that the majority of these glycoconjugates are removed by the time sperm reach the caput epididymis.

Its subcellular location is the cytoplasmic vesicle. The protein resides in the secretory vesicle. The protein localises to the acrosome. Functionally, involved in fertilization ability of sperm. The protein is Sperm equatorial segment protein 1 of Macaca fascicularis (Crab-eating macaque).